The sequence spans 629 residues: MWNVDVTCIGGIRSGEATLRPGPNIVQASNFQGKSSFLAAIQTAIGTTGLLTEDHPLMENEDDGKVTLETDEETYTVSLTRATDSDEPAISRSGTPYLTRDQDQIAARLFAVLGEDNPIRAAVREENQERLTELLKKPLETENIDLRIEALQREIKELEDEVAAAEAASADLPAAQQKVTRLQGELRDLNETRDELERKVDEETDQRALRDELTAKQSDLEREEARLERLENQVDRRKAQLDDKEAALESLDIPDSPTAEADIAEKQTRIDELAVKIDLLDDLHRSTKAIIDEGEIDLITDVERTLSGDTFSCFVCGAETTAEAVTERLNEISDRQESLREQRATLTEEVTQMQQRTREIESKRQQKAELEDEIKRLRVDIQEDQHEVRSIEATIEELQAEIEQREAEYEAAEKAGESHSAELKTIQQKIGSTETKLDRAQAELERIEAELQKRNDRQEQLETKRDELETLRQRRKQKYNELVNQFDAAMADIIGRFAPGFDGAYLDQKTDANDTVGFEINLARDGHTTDLDTLSEGERELVGIVTALAGYRTFSVGDRVPCILLDGIGQLAAEHIRHMIEYLENTAEILVTTAYPEAGSFDGETVSPEHWDVISHETAQSRDHPQITN.

2 coiled-coil regions span residues 139 to 282 (LETE…LLDD) and 318 to 487 (AETT…NQFD).

This sequence belongs to the Sph1/Sph2 family.

The protein resides in the cytoplasm. Its function is as follows. May play a role in a late step of replication. The polypeptide is Smc-like protein Sph1 (sph1) (Halobacterium salinarum (strain ATCC 29341 / DSM 671 / R1)).